A 326-amino-acid chain; its full sequence is 4-hydroxy-3-methylbut-2-enyl diphosphate reductase (326 aa).

[4Fe-4S] cluster is bound at residue cysteine 22. Residues histidine 51 and histidine 84 each contribute to the (2E)-4-hydroxy-3-methylbut-2-enyl diphosphate site. Dimethylallyl diphosphate is bound by residues histidine 51 and histidine 84. Isopentenyl diphosphate is bound by residues histidine 51 and histidine 84. Residue cysteine 106 coordinates [4Fe-4S] cluster. Residue histidine 134 participates in (2E)-4-hydroxy-3-methylbut-2-enyl diphosphate binding. Histidine 134 contacts dimethylallyl diphosphate. Residue histidine 134 coordinates isopentenyl diphosphate. Glutamate 136 (proton donor) is an active-site residue. Residue threonine 174 participates in (2E)-4-hydroxy-3-methylbut-2-enyl diphosphate binding. Residue cysteine 204 coordinates [4Fe-4S] cluster. Residues serine 232, serine 233, asparagine 234, and serine 276 each coordinate (2E)-4-hydroxy-3-methylbut-2-enyl diphosphate. 4 residues coordinate dimethylallyl diphosphate: serine 232, serine 233, asparagine 234, and serine 276. Positions 232, 233, 234, and 276 each coordinate isopentenyl diphosphate.

This sequence belongs to the IspH family. It depends on [4Fe-4S] cluster as a cofactor.

It catalyses the reaction isopentenyl diphosphate + 2 oxidized [2Fe-2S]-[ferredoxin] + H2O = (2E)-4-hydroxy-3-methylbut-2-enyl diphosphate + 2 reduced [2Fe-2S]-[ferredoxin] + 2 H(+). The enzyme catalyses dimethylallyl diphosphate + 2 oxidized [2Fe-2S]-[ferredoxin] + H2O = (2E)-4-hydroxy-3-methylbut-2-enyl diphosphate + 2 reduced [2Fe-2S]-[ferredoxin] + 2 H(+). It functions in the pathway isoprenoid biosynthesis; dimethylallyl diphosphate biosynthesis; dimethylallyl diphosphate from (2E)-4-hydroxy-3-methylbutenyl diphosphate: step 1/1. The protein operates within isoprenoid biosynthesis; isopentenyl diphosphate biosynthesis via DXP pathway; isopentenyl diphosphate from 1-deoxy-D-xylulose 5-phosphate: step 6/6. Its function is as follows. Catalyzes the conversion of 1-hydroxy-2-methyl-2-(E)-butenyl 4-diphosphate (HMBPP) into a mixture of isopentenyl diphosphate (IPP) and dimethylallyl diphosphate (DMAPP). Acts in the terminal step of the DOXP/MEP pathway for isoprenoid precursor biosynthesis. The sequence is that of 4-hydroxy-3-methylbut-2-enyl diphosphate reductase from Bordetella parapertussis (strain 12822 / ATCC BAA-587 / NCTC 13253).